The chain runs to 428 residues: Kynureninase (428 aa).

Pyridoxal 5'-phosphate is bound by residues T104, T105, 132-135 (FPSD), D213, H216, and Y238. K239 carries the N6-(pyridoxal phosphate)lysine modification. W267 and T295 together coordinate pyridoxal 5'-phosphate.

This sequence belongs to the kynureninase family. Homodimer. The cofactor is pyridoxal 5'-phosphate.

It catalyses the reaction L-kynurenine + H2O = anthranilate + L-alanine + H(+). The catalysed reaction is 3-hydroxy-L-kynurenine + H2O = 3-hydroxyanthranilate + L-alanine + H(+). It participates in amino-acid degradation; L-kynurenine degradation; L-alanine and anthranilate from L-kynurenine: step 1/1. Its pathway is cofactor biosynthesis; NAD(+) biosynthesis; quinolinate from L-kynurenine: step 2/3. In terms of biological role, catalyzes the cleavage of L-kynurenine (L-Kyn) and L-3-hydroxykynurenine (L-3OHKyn) into anthranilic acid (AA) and 3-hydroxyanthranilic acid (3-OHAA), respectively. This Bacillus cereus (strain ZK / E33L) protein is Kynureninase.